Reading from the N-terminus, the 190-residue chain is R46 site-specific recombinase (190 aa).

Positions arginine 2–glycine 137 constitute a Resolvase/invertase-type recombinase catalytic domain. Serine 10 (O-(5'-phospho-DNA)-serine intermediate) is an active-site residue. Positions alanine 161–glutamate 180 form a DNA-binding region, H-T-H motif.

This sequence belongs to the site-specific recombinase resolvase family.

In terms of biological role, site-specific recombination protein. This chain is R46 site-specific recombinase (tnpR), found in Escherichia coli.